The following is a 335-amino-acid chain: Holliday junction branch migration complex subunit RuvB (335 aa).

The large ATPase domain (RuvB-L) stretch occupies residues 1–183 (MDERIISSET…FGVIDHLEFY (183 aa)). ATP-binding positions include L22, R23, G64, K67, T68, T69, 130-132 (EDY), R173, Y183, and R220. Residue T68 participates in Mg(2+) binding. The small ATPAse domain (RuvB-S) stretch occupies residues 184–254 (TEEQLTEIVL…LAKEALTLLQ (71 aa)). Residues 257 to 335 (PRGLDTIDQK…HLGISYEKEV (79 aa)) are head domain (RuvB-H). DNA-binding residues include R293, R312, and R317.

This sequence belongs to the RuvB family. In terms of assembly, homohexamer. Forms an RuvA(8)-RuvB(12)-Holliday junction (HJ) complex. HJ DNA is sandwiched between 2 RuvA tetramers; dsDNA enters through RuvA and exits via RuvB. An RuvB hexamer assembles on each DNA strand where it exits the tetramer. Each RuvB hexamer is contacted by two RuvA subunits (via domain III) on 2 adjacent RuvB subunits; this complex drives branch migration. In the full resolvosome a probable DNA-RuvA(4)-RuvB(12)-RuvC(2) complex forms which resolves the HJ.

Its subcellular location is the cytoplasm. The enzyme catalyses ATP + H2O = ADP + phosphate + H(+). Functionally, the RuvA-RuvB-RuvC complex processes Holliday junction (HJ) DNA during genetic recombination and DNA repair, while the RuvA-RuvB complex plays an important role in the rescue of blocked DNA replication forks via replication fork reversal (RFR). RuvA specifically binds to HJ cruciform DNA, conferring on it an open structure. The RuvB hexamer acts as an ATP-dependent pump, pulling dsDNA into and through the RuvAB complex. RuvB forms 2 homohexamers on either side of HJ DNA bound by 1 or 2 RuvA tetramers; 4 subunits per hexamer contact DNA at a time. Coordinated motions by a converter formed by DNA-disengaged RuvB subunits stimulates ATP hydrolysis and nucleotide exchange. Immobilization of the converter enables RuvB to convert the ATP-contained energy into a lever motion, pulling 2 nucleotides of DNA out of the RuvA tetramer per ATP hydrolyzed, thus driving DNA branch migration. The RuvB motors rotate together with the DNA substrate, which together with the progressing nucleotide cycle form the mechanistic basis for DNA recombination by continuous HJ branch migration. Branch migration allows RuvC to scan DNA until it finds its consensus sequence, where it cleaves and resolves cruciform DNA. In Listeria monocytogenes serovar 1/2a (strain ATCC BAA-679 / EGD-e), this protein is Holliday junction branch migration complex subunit RuvB.